The primary structure comprises 133 residues: Small ribosomal subunit protein eS8 (133 aa).

Positions 1–34 (MGVWHGRSLRKPTGGRIRPHRKKRKFEMGNPPTE) are disordered.

It belongs to the eukaryotic ribosomal protein eS8 family. Part of the 30S ribosomal subunit.

The chain is Small ribosomal subunit protein eS8 from Methanopyrus kandleri (strain AV19 / DSM 6324 / JCM 9639 / NBRC 100938).